The sequence spans 337 residues: Monoacylglycerol lipase ABHD6 (337 aa).

Topologically, residues 1–8 (MDLDVVNM) are extracellular. The helical; Signal-anchor for type II membrane protein transmembrane segment at 9–29 (FVIAGGTLAIPILAFVASFLL) threads the bilayer. Residues 30 to 337 (WPSALIRIYY…HNPDNNKKLN (308 aa)) are Cytoplasmic-facing. Ser-148 (nucleophile) is an active-site residue. Active-site charge relay system residues include Asp-278 and His-306.

It belongs to the AB hydrolase superfamily.

It localises to the late endosome membrane. The protein localises to the lysosome membrane. Its subcellular location is the mitochondrion membrane. The catalysed reaction is Hydrolyzes glycerol monoesters of long-chain fatty acids.. It carries out the reaction 1-octanoylglycerol + H2O = octanoate + glycerol + H(+). It catalyses the reaction 1-decanoylglycerol + H2O = decanoate + glycerol + H(+). The enzyme catalyses 1-dodecanoylglycerol + H2O = dodecanoate + glycerol + H(+). The catalysed reaction is 1-tetradecanoylglycerol + H2O = tetradecanoate + glycerol + H(+). It carries out the reaction 2-hexadecanoylglycerol + H2O = glycerol + hexadecanoate + H(+). It catalyses the reaction 2-(9Z-octadecenoyl)-glycerol + H2O = glycerol + (9Z)-octadecenoate + H(+). The enzyme catalyses 1-(9Z-octadecenoyl)-glycerol + H2O = glycerol + (9Z)-octadecenoate + H(+). The catalysed reaction is 2-(9Z,12Z-octadecadienoyl)-glycerol + H2O = (9Z,12Z)-octadecadienoate + glycerol + H(+). It carries out the reaction 2-(5Z,8Z,11Z,14Z-eicosatetraenoyl)-glycerol + H2O = glycerol + (5Z,8Z,11Z,14Z)-eicosatetraenoate + H(+). It catalyses the reaction 1-(5Z,8Z,11Z,14Z-eicosatetraenoyl)-glycerol + H2O = glycerol + (5Z,8Z,11Z,14Z)-eicosatetraenoate + H(+). The enzyme catalyses 1-(9Z,12Z-octadecadienoyl)-glycerol + H2O = (9Z,12Z)-octadecadienoate + glycerol + H(+). The catalysed reaction is 3-(9Z-octadecenoyl)-sn-glycero-1-phospho-(3'-(9Z-octadecenoyl)-1'-sn-glycerol) + H2O = 3-(9Z-octadecenoyl)-sn-glycero-1-phospho-(1'-sn-glycerol) + (9Z)-octadecenoate + H(+). It carries out the reaction (S,S)-2-(9Z-octadecenoyl)-sn-glycero-1-phospho-(2'-(9Z-octadecenoyl)-1'-sn-glycerol) + H2O = (S,S)-2-(9Z-octadecenoyl)-sn-glycero-1-phospho-(1'-sn-glycerol) + (9Z)-octadecenoate + H(+). It catalyses the reaction (R,R)-2-(9Z-octadecenoyl)-sn-glycero-3-phospho-(2'-(9Z-octadecenoyl)-3'-sn-glycerol) + H2O = (R,R)-2-(9Z-octadecenoyl)-sn-glycero-3-phospho-(3'-sn-glycerol) + (9Z)-octadecenoate + H(+). In terms of biological role, lipase that preferentially hydrolysis medium-chain saturated monoacylglycerols including 2-arachidonoylglycerol. Through 2-arachidonoylglycerol degradation may regulate endocannabinoid signaling pathways. Also has a lysophosphatidyl lipase activity with a preference for lysophosphatidylglycerol among other lysophospholipids. Also able to degrade bis(monoacylglycero)phosphate (BMP) and constitutes the major enzyme for BMP catabolism. BMP, also known as lysobisphosphatidic acid, is enriched in late endosomes and lysosomes and plays a key role in the formation of intraluminal vesicles and in lipid sorting. In Rattus norvegicus (Rat), this protein is Monoacylglycerol lipase ABHD6.